The following is a 261-amino-acid chain: MQLSALALATLLATANAHFTVYYPGWRGDSHPTQTQGPCGGLNKIGERFKVNGKSVDVLLKTSHTSAITEYRLCLGDDCGTKSGSDGQKDFSKVLYGPINELGAGNFCMPGLPLGDLKDGQKGTIQVIMQAVDGNLYNCIDFEVDNSVDAFNAVCKNSTGVSAEAISNANAGSLAENTQGSGNSSGHAHGSSGSGSASASKTDSKSSAASGSASATSAAASSAASSAAASASATEEKNSGSLAYVNGALAIGGVVAAALLI.

Residues 1–17 (MQLSALALATLLATANA) form the signal peptide. Residues H18, H64, and D133 each coordinate Cu(2+). Disulfide bonds link C39–C139 and C108–C155. 2 N-linked (GlcNAc...) asparagine glycosylation sites follow: N157 and N183. Residues 174–210 (LAENTQGSGNSSGHAHGSSGSGSASASKTDSKSSAAS) form a disordered region. The segment covering 180-210 (GSGNSSGHAHGSSGSGSASASKTDSKSSAAS) has biased composition (low complexity). N238 carries GPI-anchor amidated asparagine lipidation. Residues 239–261 (SGSLAYVNGALAIGGVVAAALLI) constitute a propeptide, removed in mature form.

This sequence belongs to the X325 family. Cu(2+) serves as cofactor.

Its subcellular location is the cell membrane. In terms of biological role, lytic polysaccharide monooxygenase-like protein that has diverged to biological functions other than polysaccharide degradation since it does not perform oxidative cleavage of polysaccharides. Acts as a cell surface-bound protein that functions in the copper-accumulation pathway. In Yarrowia lipolytica (strain CLIB 122 / E 150) (Yeast), this protein is Lytic polysaccharide monooxygenase-like protein X325.